A 570-amino-acid chain; its full sequence is uncharacterized protein (570 aa).

Positions 1 to 15 are enriched in low complexity; that stretch reads MTESIISSRTASISS. The segment at 1 to 34 is disordered; it reads MTESIISSRTASISSKEGYEIRQGSTDSSSLDLE. Ser14 carries the phosphoserine modification. 12 helical membrane-spanning segments follow: residues 96–116, 141–161, 163–183, 198–218, 229–249, 261–281, 328–348, 369–389, 397–417, 423–443, 457–477, and 485–505; these read WKLYIYLLLMLGFLDMMLFIG, NLNTLFYVGYIVGQFPGHYIM, TFPLGKFVGLVTFSWSVIVFL, FFLGFTESCLLPAMEATMGMF, PVFWISCLSCGIPAGFIAYGL, LFMIITGGITFFLSIFLFFYY, PITWLFTFAAFTLMLSNNLAY, VALAGYNTVSAIIATFAMYLI, AMFWMLPSITGGIAFVALPWS, LATMIIASDFGITYIIALGWT, GLMFMVGYAIANIISPQLWQS, and PAWIVQIVVAWFVTPIIYLVA.

This sequence belongs to the major facilitator superfamily. Allantoate permease family.

It is found in the endoplasmic reticulum. The protein localises to the membrane. This is an uncharacterized protein from Schizosaccharomyces pombe (strain 972 / ATCC 24843) (Fission yeast).